Reading from the N-terminus, the 625-residue chain is 1-deoxy-D-xylulose-5-phosphate synthase (625 aa).

Residues H84 and 125-127 (GHS) each bind thiamine diphosphate. D156 contacts Mg(2+). Thiamine diphosphate-binding positions include 157 to 158 (GA), N185, F292, and E373. N185 provides a ligand contact to Mg(2+).

The protein belongs to the transketolase family. DXPS subfamily. As to quaternary structure, homodimer. Mg(2+) is required as a cofactor. The cofactor is thiamine diphosphate.

The catalysed reaction is D-glyceraldehyde 3-phosphate + pyruvate + H(+) = 1-deoxy-D-xylulose 5-phosphate + CO2. Its pathway is metabolic intermediate biosynthesis; 1-deoxy-D-xylulose 5-phosphate biosynthesis; 1-deoxy-D-xylulose 5-phosphate from D-glyceraldehyde 3-phosphate and pyruvate: step 1/1. Its function is as follows. Catalyzes the acyloin condensation reaction between C atoms 2 and 3 of pyruvate and glyceraldehyde 3-phosphate to yield 1-deoxy-D-xylulose-5-phosphate (DXP). This Marinomonas sp. (strain MWYL1) protein is 1-deoxy-D-xylulose-5-phosphate synthase.